A 384-amino-acid polypeptide reads, in one-letter code: 1-deoxy-D-xylulose 5-phosphate reductoisomerase (384 aa).

NADPH contacts are provided by threonine 10, glycine 11, serine 12, isoleucine 13, arginine 37, asparagine 38, and asparagine 124. Lysine 125 serves as a coordination point for 1-deoxy-D-xylulose 5-phosphate. Position 126 (glutamate 126) interacts with NADPH. Position 150 (aspartate 150) interacts with Mn(2+). Positions 151, 152, 176, and 199 each coordinate 1-deoxy-D-xylulose 5-phosphate. Glutamate 152 is a binding site for Mn(2+). Glycine 205 contacts NADPH. Residues serine 212, asparagine 217, lysine 218, and glutamate 221 each contribute to the 1-deoxy-D-xylulose 5-phosphate site. Residue glutamate 221 coordinates Mn(2+).

This sequence belongs to the DXR family. The cofactor is Mg(2+). Mn(2+) is required as a cofactor.

It carries out the reaction 2-C-methyl-D-erythritol 4-phosphate + NADP(+) = 1-deoxy-D-xylulose 5-phosphate + NADPH + H(+). It functions in the pathway isoprenoid biosynthesis; isopentenyl diphosphate biosynthesis via DXP pathway; isopentenyl diphosphate from 1-deoxy-D-xylulose 5-phosphate: step 1/6. Functionally, catalyzes the NADPH-dependent rearrangement and reduction of 1-deoxy-D-xylulose-5-phosphate (DXP) to 2-C-methyl-D-erythritol 4-phosphate (MEP). The sequence is that of 1-deoxy-D-xylulose 5-phosphate reductoisomerase from Clostridium perfringens (strain 13 / Type A).